The chain runs to 88 residues: Large ribosomal subunit protein bL27 (88 aa).

Residues 1–21 (MAHKKAGGSSRNGRDSDGRRL) form a disordered region.

This sequence belongs to the bacterial ribosomal protein bL27 family.

This chain is Large ribosomal subunit protein bL27, found in Methylobacterium nodulans (strain LMG 21967 / CNCM I-2342 / ORS 2060).